A 68-amino-acid polypeptide reads, in one-letter code: DNA-directed RNA polymerase subunit omega (68 aa).

This sequence belongs to the RNA polymerase subunit omega family. As to quaternary structure, the RNAP catalytic core consists of 2 alpha, 1 beta, 1 beta' and 1 omega subunit. When a sigma factor is associated with the core the holoenzyme is formed, which can initiate transcription.

The catalysed reaction is RNA(n) + a ribonucleoside 5'-triphosphate = RNA(n+1) + diphosphate. In terms of biological role, promotes RNA polymerase assembly. Latches the N- and C-terminal regions of the beta' subunit thereby facilitating its interaction with the beta and alpha subunits. The protein is DNA-directed RNA polymerase subunit omega of Brevibacillus brevis (strain 47 / JCM 6285 / NBRC 100599).